The following is a 134-amino-acid chain: Protein PsiB (134 aa).

In terms of biological role, could be involved directly or indirectly in exopolysaccharide synthesis. The sequence is that of Protein PsiB (psiB) from Rhizobium leguminosarum bv. phaseoli.